A 111-amino-acid chain; its full sequence is Ribonuclease P protein component (111 aa).

It belongs to the RnpA family. As to quaternary structure, consists of a catalytic RNA component (M1 or rnpB) and a protein subunit.

The catalysed reaction is Endonucleolytic cleavage of RNA, removing 5'-extranucleotides from tRNA precursor.. Functionally, RNaseP catalyzes the removal of the 5'-leader sequence from pre-tRNA to produce the mature 5'-terminus. It can also cleave other RNA substrates such as 4.5S RNA. The protein component plays an auxiliary but essential role in vivo by binding to the 5'-leader sequence and broadening the substrate specificity of the ribozyme. In Clostridium botulinum (strain Loch Maree / Type A3), this protein is Ribonuclease P protein component.